Reading from the N-terminus, the 132-residue chain is Interleukin-5 (132 aa).

The first 19 residues, 1-19, serve as a signal peptide directing secretion; the sequence is MRMLLHLSILTLACVWTFA. N-linked (GlcNAc...) asparagine glycosylation is found at Asn45, Asn74, and Asn88.

Belongs to the IL-5 family. As to quaternary structure, homodimer; disulfide-linked. Interacts with IL5RA. Interacts with CSF2RB.

The protein resides in the secreted. Functionally, homodimeric cytokine expressed predominantly by T-lymphocytes and NK cells that plays an important role in the survival, differentiation, and chemotaxis of eosinophils. Also acts on activated and resting B-cells to induce immunoglobulin production, growth, and differentiation. Mechanistically, exerts its biological effects through a receptor composed of IL5RA subunit and the cytokine receptor common subunit beta/CSF2RB. Binding to the receptor leads to activation of various kinases including LYN, SYK and JAK2 and thereby propagates signals through the RAS-MAPK and JAK-STAT5 pathways respectively. This chain is Interleukin-5 (IL5), found in Sigmodon hispidus (Hispid cotton rat).